A 245-amino-acid chain; its full sequence is Octanoyltransferase (245 aa).

In terms of domain architecture, BPL/LPL catalytic spans 54-242 (QNAHEQVWLL…SFEQIFGPII (189 aa)). Substrate contacts are provided by residues 93–100 (RGGEFTYH), 173–175 (AIG), and 186–188 (GVS). C204 acts as the Acyl-thioester intermediate in catalysis.

It belongs to the LipB family.

It localises to the cytoplasm. It catalyses the reaction octanoyl-[ACP] + L-lysyl-[protein] = N(6)-octanoyl-L-lysyl-[protein] + holo-[ACP] + H(+). It participates in protein modification; protein lipoylation via endogenous pathway; protein N(6)-(lipoyl)lysine from octanoyl-[acyl-carrier-protein]: step 1/2. Catalyzes the transfer of endogenously produced octanoic acid from octanoyl-acyl-carrier-protein onto the lipoyl domains of lipoate-dependent enzymes. Lipoyl-ACP can also act as a substrate although octanoyl-ACP is likely to be the physiological substrate. The polypeptide is Octanoyltransferase (Bartonella henselae (strain ATCC 49882 / DSM 28221 / CCUG 30454 / Houston 1) (Rochalimaea henselae)).